The sequence spans 214 residues: Soluble inorganic pyrophosphatase (214 aa).

A disordered region spans residues 1–20; it reads MSEEDKTAASAEQPKRAPKL. Substrate-binding residues include Lys-64, Arg-78, and Tyr-90. 3 residues coordinate Mg(2+): Asp-100, Asp-105, and Asp-137. Tyr-174 contributes to the substrate binding site.

It belongs to the PPase family. Requires Mg(2+) as cofactor.

Its subcellular location is the cytoplasm. It carries out the reaction diphosphate + H2O = 2 phosphate + H(+). The chain is Soluble inorganic pyrophosphatase (IPP) from Zea mays (Maize).